The sequence spans 107 residues: UPF0060 membrane protein ZMO1566 (107 aa).

4 helical membrane passes run 4 to 24, 29 to 49, 55 to 75, and 84 to 104; these read LLYIPAALAEITGCFSFWAWI, SPLWLLPGIASLLLFAWLLTF, AGKAYAVYGGIYIIMSLLWSW, and HWDLIGAAFCLVGAAIILWMP.

This sequence belongs to the UPF0060 family.

It localises to the cell inner membrane. This chain is UPF0060 membrane protein ZMO1566, found in Zymomonas mobilis subsp. mobilis (strain ATCC 31821 / ZM4 / CP4).